Consider the following 320-residue polypeptide: Serpentine receptor class gamma-17 (320 aa).

The next 6 membrane-spanning stretches (helical) occupy residues 25-45 (AIYF…ISLL), 80-100 (IFFG…STFF), 155-175 (FIML…QVIA), 192-212 (WASL…FTIV), 237-257 (FTSI…LTFA), and 268-288 (YILQ…IMFL).

This sequence belongs to the nematode receptor-like protein srg family.

Its subcellular location is the membrane. This Caenorhabditis elegans protein is Serpentine receptor class gamma-17 (srg-17).